Consider the following 284-residue polypeptide: Phosphoenolpyruvate guanylyltransferase (284 aa).

A disordered region spans residues 94–123 (ADLSADEPAGTDAERRADPSAENRASTSAQ). Residues 105–114 (DAERRADPSA) show a composition bias toward basic and acidic residues. 3 residues coordinate phosphoenolpyruvate: threonine 203, glycine 219, and serine 222.

Belongs to the CofC family.

It catalyses the reaction phosphoenolpyruvate + GTP + H(+) = enolpyruvoyl-2-diphospho-5'-guanosine + diphosphate. It functions in the pathway cofactor biosynthesis; coenzyme F420 biosynthesis. Guanylyltransferase that catalyzes the activation of phosphoenolpyruvate (PEP) as enolpyruvoyl-2-diphospho-5'-guanosine, via the condensation of PEP with GTP. It is involved in the biosynthesis of coenzyme F420, a hydride carrier cofactor. The chain is Phosphoenolpyruvate guanylyltransferase from Sanguibacter keddieii (strain ATCC 51767 / DSM 10542 / NCFB 3025 / ST-74).